We begin with the raw amino-acid sequence, 309 residues long: Small ribosomal subunit biogenesis GTPase RsgA (309 aa).

The CP-type G domain maps to 64–225; it reads ENELVRPPLA…VADTPGFSTY (162 aa). Residues 113–116 and 168–176 contribute to the GTP site; these read SKTD and GQTGAGKST. Positions 249, 254, 256, and 262 each coordinate Zn(2+).

The protein belongs to the TRAFAC class YlqF/YawG GTPase family. RsgA subfamily. In terms of assembly, monomer. Associates with 30S ribosomal subunit, binds 16S rRNA. Zn(2+) is required as a cofactor.

It is found in the cytoplasm. Functionally, one of several proteins that assist in the late maturation steps of the functional core of the 30S ribosomal subunit. Helps release RbfA from mature subunits. May play a role in the assembly of ribosomal proteins into the subunit. Circularly permuted GTPase that catalyzes slow GTP hydrolysis, GTPase activity is stimulated by the 30S ribosomal subunit. This is Small ribosomal subunit biogenesis GTPase RsgA from Pediococcus pentosaceus (strain ATCC 25745 / CCUG 21536 / LMG 10740 / 183-1w).